The chain runs to 714 residues: DNA ligase (714 aa).

NAD(+) contacts are provided by residues 47–51, 96–97, and glutamate 128; these read DAEYD and SL. Lysine 130 (N6-AMP-lysine intermediate) is an active-site residue. Residues arginine 151, glutamate 188, lysine 306, and lysine 330 each coordinate NAD(+). Residues cysteine 435, cysteine 438, cysteine 453, and cysteine 459 each contribute to the Zn(2+) site. The BRCT domain occupies 637-714; sequence RRDTAVAGKT…TEDEWLALIS (78 aa).

The protein belongs to the NAD-dependent DNA ligase family. LigA subfamily. Requires Mg(2+) as cofactor. The cofactor is Mn(2+).

It catalyses the reaction NAD(+) + (deoxyribonucleotide)n-3'-hydroxyl + 5'-phospho-(deoxyribonucleotide)m = (deoxyribonucleotide)n+m + AMP + beta-nicotinamide D-nucleotide.. In terms of biological role, DNA ligase that catalyzes the formation of phosphodiester linkages between 5'-phosphoryl and 3'-hydroxyl groups in double-stranded DNA using NAD as a coenzyme and as the energy source for the reaction. It is essential for DNA replication and repair of damaged DNA. The sequence is that of DNA ligase from Rhodopseudomonas palustris (strain HaA2).